Reading from the N-terminus, the 10287-residue chain is Putative E3 ubiquitin-protein ligase protein PFF1365c (10287 aa).

Residues 47–82 (TRFFKSISNYGEFLLLQSSSRVISSYEHILRLLHQA) form a TPR 1 repeat. Positions 566 to 589 (TNKSRDNINQNTNTNNNNNNNNNN) are enriched in low complexity. A disordered region spans residues 566-592 (TNKSRDNINQNTNTNNNNNNNNNNDGD). One copy of the TPR 2 repeat lies at 631 to 665 (YPMFLKIQNKPQRCLKDISKPCEYYSNTLPIYGSY). 3 disordered regions span residues 740–823 (KSSV…NKKK), 1221–1251 (NNSNYNDNSHYTHNSLKSQNISSSTYSSSSS), and 1599–1670 (YVDD…DDNN). Composition is skewed to low complexity over residues 767-810 (KANN…NNNN), 1221-1235 (NNSNYNDNSHYTHNS), and 1242-1251 (SSSTYSSSSS). A compositionally biased stretch (acidic residues) spans 1601–1635 (DDNEEDEGEEDKSEDYEYCDDEQQNDVYEDTEEES). The segment covering 1641 to 1653 (RKERRVHQKKKNS) has biased composition (basic residues). A compositionally biased stretch (low complexity) spans 1654–1670 (KVSINKKTNNSLSDDNN). The next 3 helical transmembrane spans lie at 1821 to 1841 (ACTFIISGIIPCLGYVTTLFV), 1860 to 1880 (LKMALNIWPMFLKITLQGLLT), and 1900 to 1920 (ECCISITSLATHFLTLFTIMI). Over residues 2070–2080 (SRRGIPLKKKS) the composition is skewed to basic residues. The tract at residues 2070–2112 (SRRGIPLKKKSERNNSKEENVNNMDHNNNNNSNSNNNNFFHRG) is disordered. Positions 2090–2107 (VNNMDHNNNNNSNSNNNN) are enriched in low complexity. Residues 2116-2145 (TNPRNNNITCDRKNMEFLKKLMKNDHDAVQ) form an ANK 1 repeat. The TPR 3 repeat unit spans residues 2141 to 2175 (HDAVQCLGKAYSVFHKNFERAQIAFVAVFLHLTGY). A compositionally biased stretch (polar residues) spans 2854-2865 (NLSSNKRSQKGY). Disordered stretches follow at residues 2854–2945 (NLSS…SKEP), 3087–3113 (KNRNSNNNNNNNNTNNSNNSNNNNNIN), 3303–3344 (NGHT…NDRG), 3561–3599 (FSKGKQKKEMQENEDEKIKNKGKNKTKTNDDKKKNSSIN), 3942–3998 (TMEN…KDHI), 4076–4157 (LFNS…INYY), 4695–4716 (EKKNFQDDSIMSNRQSDNKEEG), 4886–4972 (SPYF…LRNS), and 4984–5051 (YRNK…SNAD). The segment covering 2886 to 2929 (SLDKYNDKEKKNDKINNGDTKNSDDGKIDMDDKKYYNDDLKNSD) has biased composition (basic and acidic residues). Low complexity predominate over residues 3090–3113 (NSNNNNNNNNTNNSNNSNNNNNIN). The segment covering 3316–3335 (YDDDNCDNYDNYDNDNENDN) has biased composition (acidic residues). 2 stretches are compositionally biased toward basic and acidic residues: residues 3567–3579 (KKEMQENEDEKIK) and 3965–3974 (PSKDKSKHYN). Positions 3975 to 3992 (DNNNNNNDDNNSNNNNDY) are enriched in low complexity. Positions 4079–4094 (SKKDGSSNNDKNDNSN) are enriched in basic and acidic residues. Low complexity-rich tracts occupy residues 4095–4116 (KNRNNYNNNDDNNNNDDNNNNN) and 4124–4157 (NINNNYNNNNNNNNRNNSNSNNSNNSDNNNINYY). The span at 4906 to 4917 (YNIQNSDNSNIG) shows a compositional bias: polar residues. 2 stretches are compositionally biased toward low complexity: residues 4918-4942 (DSELNVNVNDNDNSSCGSNSKDSLN) and 4953-4972 (NSSSESGNTNSNNENSLRNS). Over residues 5026-5045 (KIKKNKSYKNKTHKNKKQKN) the composition is skewed to basic residues. 5 helical membrane passes run 5058 to 5078 (LYGYTLCLIGTKSIMCCCIIL), 5106 to 5126 (FIKLFFFIDIGISDVLIKYFA), 5552 to 5572 (EEILNIFSIMYLFRICIYYLG), 5716 to 5736 (LPIFLGIDVCRLVYWCCVVYI), and 5815 to 5835 (FLSYVFHCVNICGSSVINQII). A disordered region spans residues 5848–5917 (VNKNKGNDNV…NNNNVRNSNN (70 aa)). The ANK 2 repeat unit spans residues 6004 to 6032 (GINSLYVNGTNGNLKTDKILLHNFSNFDL). One copy of the TPR 4 repeat lies at 6051–6084 (LVHYFACAAYYIKRADVYNIMNYYNEHTHANFKQ). Disordered regions lie at residues 6495–6527 (EEEKENENEKEVEKDENVHDEKDKVEQIEHEKK), 7123–7147 (EKKKKTGSNNIGSNTNIHELSDNNR), and 7183–7217 (NKNNTSSSSNNNNNNKNNNNNNDNNNDNDNICSNS). Positions 6501–6527 (ENEKEVEKDENVHDEKDKVEQIEHEKK) are enriched in basic and acidic residues. A compositionally biased stretch (polar residues) spans 7129 to 7147 (GSNNIGSNTNIHELSDNNR). 2 TPR repeats span residues 7347 to 7380 (SNDSSNYSLYYIGCKEFKLCIDSYDSIFPAKPFI) and 7577 to 7610 (NNNNDSMNNHKDDMNNYNDNINNYVESMNNYDDI). The span at 7571–7583 (DDGNNNNNNNDSM) shows a compositional bias: low complexity. Disordered stretches follow at residues 7571–7590 (DDGNNNNNNNDSMNNHKDDM) and 7653–7712 (SNER…VNNI). Residues 7696–7706 (DNNKDKDDGNH) show a composition bias toward basic and acidic residues. 3 ANK repeats span residues 7809–7839 (KYLTPLMLACRIGCEECVQNIIEKGKVNPNK), 7845–7875 (EKETPLMVAAQYGHSRIVCMLICVYGVQVNK), and 7880–7917 (GNTALHKILLNYSNTEGKKNSTIKIVQLLLKLGADLTI). Disordered stretches follow at residues 8208–8300 (LKDD…SAKN) and 8413–8448 (ALNSNMSNNNNNNNNSNNNNNNNSNNNNNNYNNNYN). Residues 8219-8259 (YQKPYDKKVINKNKNDNYDKNDNYDKKDNYDTNDKNDKNNC) show a composition bias toward basic and acidic residues. Residues 8277 to 8300 (VMNTNSSGRRTISKNSPNLSSAKN) are compositionally biased toward polar residues. Residues 8415 to 8448 (NSNMSNNNNNNNNSNNNNNNNSNNNNNNYNNNYN) are compositionally biased toward low complexity. TPR repeat units lie at residues 8782–8815 (QTCDKYIYKSEMKEEMYNKSNELYNNSLNNSNNI) and 9550–9584 (DLPIQLSSYLFIKKLLKHDTCLKLWKECLKYITSS). Disordered regions lie at residues 9795-9818 (MGSDNILKDGVHKDNNNQKGHKYD) and 9913-9979 (NVLL…SKNT). Basic and acidic residues-rich tracts occupy residues 9800 to 9818 (ILKDGVHKDNNNQKGHKYD) and 9913 to 9930 (NVLLRDPHENENMRDDIR). The span at 9931-9971 (NNMNNNNNNNNNNNNNNNNNNNNNNNNNNNNNNNNNNNNLN) shows a compositional bias: low complexity. The region spanning 9938–10273 (NNNNNNNNNN…IKNCTAIDLD (336 aa)) is the HECT domain. Cys10241 serves as the catalytic Glycyl thioester intermediate.

It is found in the membrane. The catalysed reaction is S-ubiquitinyl-[E2 ubiquitin-conjugating enzyme]-L-cysteine + [acceptor protein]-L-lysine = [E2 ubiquitin-conjugating enzyme]-L-cysteine + N(6)-ubiquitinyl-[acceptor protein]-L-lysine.. The protein operates within protein modification; protein ubiquitination. In terms of biological role, putative E3 ubiquitin-protein ligase. In Plasmodium falciparum (isolate 3D7), this protein is Putative E3 ubiquitin-protein ligase protein PFF1365c.